The chain runs to 364 residues: Chorismate synthase (364 aa).

Arg47 provides a ligand contact to NADP(+). FMN-binding positions include 124 to 126 (RGS), 240 to 241 (NA), Gly284, 299 to 303 (KPTPS), and Arg326.

The protein belongs to the chorismate synthase family. The cofactor is FMNH2.

It catalyses the reaction 5-O-(1-carboxyvinyl)-3-phosphoshikimate = chorismate + phosphate. The protein operates within metabolic intermediate biosynthesis; chorismate biosynthesis; chorismate from D-erythrose 4-phosphate and phosphoenolpyruvate: step 7/7. Its function is as follows. Catalyzes the anti-1,4-elimination of the C-3 phosphate and the C-6 proR hydrogen from 5-enolpyruvylshikimate-3-phosphate (EPSP) to yield chorismate, which is the branch point compound that serves as the starting substrate for the three terminal pathways of aromatic amino acid biosynthesis. This reaction introduces a second double bond into the aromatic ring system. This is Chorismate synthase from Methanobrevibacter smithii (strain ATCC 35061 / DSM 861 / OCM 144 / PS).